The sequence spans 380 residues: MTYDLPPLREPDLPRTAKVRPVALRTGWTTGACATAATKAALTALVTGVSPEQVEIGLPAGRRVCFPVARCDRTADGVEAVVVKDAGDDPDVTHGAELTATVGWRWVPGLALEGGPGVGTVTKPGLGLTVGGPAINDTPRRMIGEAVAEVVDLAVVGVRVVISVPRGEIMARKTTNRRLGIIGGISILGTTGVVRPFSTASWRASVVQAVQVAAAQGEQTVVLCTGGRTERAARELLPELPEVCFVEVGDFTGAAVTAAVTHGLSGVAFVGMAGKLAKLAAGVLMTHYTRSKVDLSLLGAVTVEAGGSADLAAAVTAANTGRHAYELWEAAGLLGPAGDLLCRRVRTVLRRFAGDAVTVDVAMVDFAGARRVAASGRWSQ.

The protein belongs to the CbiD family.

It carries out the reaction Co-precorrin-5B + S-adenosyl-L-methionine = Co-precorrin-6A + S-adenosyl-L-homocysteine. It functions in the pathway cofactor biosynthesis; adenosylcobalamin biosynthesis; cob(II)yrinate a,c-diamide from sirohydrochlorin (anaerobic route): step 6/10. In terms of biological role, catalyzes the methylation of C-1 in cobalt-precorrin-5B to form cobalt-precorrin-6A. In Salinispora tropica (strain ATCC BAA-916 / DSM 44818 / JCM 13857 / NBRC 105044 / CNB-440), this protein is Cobalt-precorrin-5B C(1)-methyltransferase.